Here is a 222-residue protein sequence, read N- to C-terminus: Ribonuclease 3 (222 aa).

Positions 3–125 (SQSVAKKLNH…LFGAIYLDAG (123 aa)) constitute an RNase III domain. A Mg(2+)-binding site is contributed by Glu38. The active site involves Asp42. Mg(2+) is bound by residues Asp111 and Glu114. Glu114 is an active-site residue. The region spanning 152 to 222 (DAKTRLQEWL…AEKALKELLA (71 aa)) is the DRBM domain.

The protein belongs to the ribonuclease III family. As to quaternary structure, homodimer. The cofactor is Mg(2+).

It localises to the cytoplasm. The enzyme catalyses Endonucleolytic cleavage to 5'-phosphomonoester.. In terms of biological role, digests double-stranded RNA. Involved in the processing of primary rRNA transcript to yield the immediate precursors to the large and small rRNAs (23S and 16S). Processes some mRNAs, and tRNAs when they are encoded in the rRNA operon. Processes pre-crRNA and tracrRNA of type II CRISPR loci if present in the organism. The protein is Ribonuclease 3 of Dechloromonas aromatica (strain RCB).